Consider the following 212-residue polypeptide: Large ribosomal subunit protein uL3 (212 aa).

Polar residues predominate over residues 135–155 (ATHGNSVSHRAHGSTGQNQSP). Residues 135–162 (ATHGNSVSHRAHGSTGQNQSPGKVFKGK) form a disordered region. At Q153 the chain carries N5-methylglutamine.

Belongs to the universal ribosomal protein uL3 family. In terms of assembly, part of the 50S ribosomal subunit. Forms a cluster with proteins L14 and L19. Post-translationally, methylated by PrmB.

One of the primary rRNA binding proteins, it binds directly near the 3'-end of the 23S rRNA, where it nucleates assembly of the 50S subunit. The sequence is that of Large ribosomal subunit protein uL3 from Psychrobacter arcticus (strain DSM 17307 / VKM B-2377 / 273-4).